Here is a 273-residue protein sequence, read N- to C-terminus: Proteasome subunit beta type-7-A (273 aa).

The propeptide at 1–37 (MSQSTVDVPPKGGFSFDLCKRNDMLTQKGLKAPSFLK) is removed in mature form. T40 serves as the catalytic Nucleophile.

This sequence belongs to the peptidase T1B family. In terms of assembly, component of the 20S core complex of the 26S proteasome. The 26S proteasome is composed of a core protease (CP), known as the 20S proteasome, capped at one or both ends by the 19S regulatory particle (RP/PA700). The 20S proteasome core is composed of 28 subunits that are arranged in four stacked rings, resulting in a barrel-shaped structure. The two end rings are each formed by seven alpha subunits, and the two central rings are each formed by seven beta subunits. The catalytic chamber with the active sites is on the inside of the barrel.

Its subcellular location is the cytoplasm. It is found in the nucleus. It catalyses the reaction Cleavage of peptide bonds with very broad specificity.. In terms of biological role, the proteasome is a multicatalytic proteinase complex which is characterized by its ability to cleave peptides with Arg, Phe, Tyr, Leu, and Glu adjacent to the leaving group at neutral or slightly basic pH. The proteasome has an ATP-dependent proteolytic activity. The polypeptide is Proteasome subunit beta type-7-A (PBB1) (Arabidopsis thaliana (Mouse-ear cress)).